A 472-amino-acid chain; its full sequence is GTPase Der (472 aa).

EngA-type G domains are found at residues 3-166 (PIIA…IQNN) and 188-361 (IKLA…HCST). GTP contacts are provided by residues 9 to 16 (GRPNVGKS), 56 to 60 (DTGGI), 118 to 121 (NKID), 194 to 201 (GSSNVGKS), 241 to 245 (DTAGL), and 306 to 309 (NKWD). The KH-like domain occupies 362–446 (KRISTALLTK…PIRIQFNEPA (85 aa)).

This sequence belongs to the TRAFAC class TrmE-Era-EngA-EngB-Septin-like GTPase superfamily. EngA (Der) GTPase family. In terms of assembly, associates with the 50S ribosomal subunit.

Its function is as follows. GTPase that plays an essential role in the late steps of ribosome biogenesis. The protein is GTPase Der of Baumannia cicadellinicola subsp. Homalodisca coagulata.